Consider the following 563-residue polypeptide: Alpha-keto-acid decarboxylase (563 aa).

Glutamate 59 is a thiamine diphosphate binding site. The tract at residues 347 to 367 is disordered; the sequence is SSPPVASPPAEPLPPPPPREQ. Residues 351 to 366 are compositionally biased toward pro residues; it reads VASPPAEPLPPPPPRE. Residues 394 to 476 are thiamine pyrophosphate binding; that stretch reads TSFYGMADHR…VVVNNDGYTV (83 aa). Positions 444, 471, and 473 each coordinate Mg(2+).

This sequence belongs to the TPP enzyme family. A metal cation serves as cofactor. Thiamine diphosphate is required as a cofactor.

Decarboxylates branched-chain and aromatic alpha-keto acids to aldehydes. This chain is Alpha-keto-acid decarboxylase (kdc), found in Mycolicibacterium paratuberculosis (strain ATCC BAA-968 / K-10) (Mycobacterium paratuberculosis).